Here is a 698-residue protein sequence, read N- to C-terminus: MSQEKKVFKTEWAGRSLTIETGQLAKQANGAVLVRYGDTVVLSTATASKEPRDGDFFPLTVNYEEKMYAAGKIPGGFKKREGRPGDDATLTARLIDRPIRPLFPKGYKHDVQIMNMVLSADPDCSPQMAAMIGSSMALSVSDIPFQGPIAGVNVGYIDGKYIINPTVEEKEVSRLDLEVAGHKDAVNMVEAGASEITEQEMLEAIFFGHEEIQRLVDFQQQIVDHIQPVKQEFIPAERDEALVERIKSLTEEKGLKETVLTFDKQQRDENLDNLKEEIVNEFIDEEDPENELLIKEVYAILNELVKEEVRRLIADEKIRPDGRKPDEIRQLDSEVGILPRTHGSGLFTRGQTQALSVLTLGALGDYQLIDGLGPEEEKRFMHHYNFPNFSVGETGPVRAPGRREIGHGALGERALKYIIPDTADFPYTIRIVSEVLESNGSSSQASICGSTLALMDAGVPIKAPVAGIAMGLVTREDSYTILTDIQGMEDALGDMDFKVAGTKEGITAIQMDIKIDGLTREIIEEALEQARRGRLEIMNHMLQTIDQPRTELSAYAPKVVTMTIKPDKIRDVIGPGGKKINEIIDETGVKLDIEQDGTIFIGAVDQAMINRAREIIEEITREAEVGQTYQATVKRIEKYGAFVGLFPGKDALLHISQISKNRIEKVEDVLKIGDTIEVKITEIDKQGRVNASHRALEE.

2 residues coordinate Mg(2+): Asp490 and Asp496. Positions 557-616 (PKVVTMTIKPDKIRDVIGPGGKKINEIIDETGVKLDIEQDGTIFIGAVDQAMINRAREII) constitute a KH domain. The region spanning 626-694 (GQTYQATVKR…KQGRVNASHR (69 aa)) is the S1 motif domain.

The protein belongs to the polyribonucleotide nucleotidyltransferase family. It depends on Mg(2+) as a cofactor.

Its subcellular location is the cytoplasm. The catalysed reaction is RNA(n+1) + phosphate = RNA(n) + a ribonucleoside 5'-diphosphate. Functionally, involved in mRNA degradation. Catalyzes the phosphorolysis of single-stranded polyribonucleotides processively in the 3'- to 5'-direction. This chain is Polyribonucleotide nucleotidyltransferase, found in Staphylococcus aureus (strain bovine RF122 / ET3-1).